The sequence spans 119 residues: Large ribosomal subunit protein bL20 (119 aa).

Belongs to the bacterial ribosomal protein bL20 family.

Functionally, binds directly to 23S ribosomal RNA and is necessary for the in vitro assembly process of the 50S ribosomal subunit. It is not involved in the protein synthesizing functions of that subunit. The chain is Large ribosomal subunit protein bL20 from Saccharophagus degradans (strain 2-40 / ATCC 43961 / DSM 17024).